Consider the following 405-residue polypeptide: S-adenosylmethionine synthase (405 aa).

H22 contacts ATP. D24 contacts Mg(2+). Position 50 (E50) interacts with K(+). L-methionine contacts are provided by E63 and Q107. Residues 107-117 (QSPDIAQGVDR) are flexible loop. ATP contacts are provided by residues 184–186 (DGK), 250–251 (RF), D259, 265–266 (RK), A282, and K286. D259 serves as a coordination point for L-methionine. K290 contributes to the L-methionine binding site.

The protein belongs to the AdoMet synthase family. Homotetramer; dimer of dimers. Mg(2+) is required as a cofactor. Requires K(+) as cofactor.

It localises to the cytoplasm. It catalyses the reaction L-methionine + ATP + H2O = S-adenosyl-L-methionine + phosphate + diphosphate. It functions in the pathway amino-acid biosynthesis; S-adenosyl-L-methionine biosynthesis; S-adenosyl-L-methionine from L-methionine: step 1/1. Its function is as follows. Catalyzes the formation of S-adenosylmethionine (AdoMet) from methionine and ATP. The overall synthetic reaction is composed of two sequential steps, AdoMet formation and the subsequent tripolyphosphate hydrolysis which occurs prior to release of AdoMet from the enzyme. The chain is S-adenosylmethionine synthase from Roseiflexus sp. (strain RS-1).